Consider the following 448-residue polypeptide: Tubulin alpha chain, nucleomorph (448 aa).

GTP is bound by residues glutamine 11, glutamate 71, serine 140, glycine 144, threonine 145, threonine 179, asparagine 206, and asparagine 228. Mg(2+) is bound at residue glutamate 71. Residue glutamate 254 is part of the active site.

It belongs to the tubulin family. As to quaternary structure, dimer of alpha and beta chains. A typical microtubule is a hollow water-filled tube with an outer diameter of 25 nm and an inner diameter of 15 nM. Alpha-beta heterodimers associate head-to-tail to form protofilaments running lengthwise along the microtubule wall with the beta-tubulin subunit facing the microtubule plus end conferring a structural polarity. Microtubules usually have 13 protofilaments but different protofilament numbers can be found in some organisms and specialized cells. It depends on Mg(2+) as a cofactor.

It catalyses the reaction GTP + H2O = GDP + phosphate + H(+). Tubulin is the major constituent of microtubules, a cylinder consisting of laterally associated linear protofilaments composed of alpha- and beta-tubulin heterodimers. Microtubules grow by the addition of GTP-tubulin dimers to the microtubule end, where a stabilizing cap forms. Below the cap, tubulin dimers are in GDP-bound state, owing to GTPase activity of alpha-tubulin. In Guillardia theta (Cryptophyte), this protein is Tubulin alpha chain, nucleomorph (tubA).